The chain runs to 107 residues: Nucleoid-associated protein RF_1365 (107 aa).

It belongs to the YbaB/EbfC family. As to quaternary structure, homodimer.

Its subcellular location is the cytoplasm. The protein localises to the nucleoid. Functionally, binds to DNA and alters its conformation. May be involved in regulation of gene expression, nucleoid organization and DNA protection. This chain is Nucleoid-associated protein RF_1365, found in Rickettsia felis (strain ATCC VR-1525 / URRWXCal2) (Rickettsia azadi).